The sequence spans 433 residues: 26S proteasome regulatory subunit 7 (433 aa).

A disordered region spans residues 1–23; it reads MPDYLGADQRKTKEEEKEDKPIR. The segment covering 8–23 has biased composition (basic and acidic residues); sequence DQRKTKEEEKEDKPIR. Residue 216–223 participates in ATP binding; sequence GPPGTGKT.

The protein belongs to the AAA ATPase family. Post-translationally, phosphorylated. Dephosphorylated by ublcp1 which impairs psmc2 ATPase activity and disrupts 26S proteasome assembly.

The protein localises to the cytoplasm. Its subcellular location is the nucleus. In terms of biological role, the 26S proteasome is involved in the ATP-dependent degradation of ubiquitinated proteins. The regulatory (or ATPase) complex confers ATP dependency and substrate specificity to the 26S complex. This Xenopus laevis (African clawed frog) protein is 26S proteasome regulatory subunit 7 (psmc2).